The chain runs to 274 residues: RNA polymerase sigma factor SigI4 (274 aa).

The short motif at 87-100 is the Polymerase core binding element; it reads EEYSVGLMAFNEAI. Positions 226–245 form a DNA-binding region, H-T-H motif; that stretch reads LSELMGLVNVHRKTVERNRK.

It belongs to the sigma-70 factor family. SigI subfamily. As to quaternary structure, interacts with RsgI4.

The protein resides in the cytoplasm. Negatively regulated by the anti-sigma-I factor RsgI4. Binding of the polysaccharide substrate to RsgI4 may lead to the release and activation of SigI4. Functionally, sigma factors are initiation factors that promote the attachment of RNA polymerase to specific initiation sites and are then released. This sigma factor is involved in regulation of cellulosomal genes via an external polysaccharide-sensing mechanism. In Acetivibrio thermocellus (strain ATCC 27405 / DSM 1237 / JCM 9322 / NBRC 103400 / NCIMB 10682 / NRRL B-4536 / VPI 7372) (Clostridium thermocellum), this protein is RNA polymerase sigma factor SigI4.